The chain runs to 426 residues: Histidine--tRNA ligase (426 aa).

The protein belongs to the class-II aminoacyl-tRNA synthetase family. In terms of assembly, homodimer.

The protein localises to the cytoplasm. The enzyme catalyses tRNA(His) + L-histidine + ATP = L-histidyl-tRNA(His) + AMP + diphosphate + H(+). This is Histidine--tRNA ligase from Prochlorococcus marinus (strain MIT 9312).